A 682-amino-acid chain; its full sequence is MAPQKYSAQVMNSKANGAVYPSSGVSSLKKPKIEQLQADHELFLQAFEKPTQIYRFLRTRNLITPVLLHRTLTFMSHRNSRTNAKRKSFKVDDLLSSVEKMKGEPESPSLTSHLQLTFTGFFHKNVKPCQNSENEQNSVSLEVLLVKVCHKKRKDVSCPIKQVPTGKKQVPLNPDLSQTKPGAFPSLLVSSNEFEPSNSHMVKSYSLLFRVSHTGKRDPNGFISCEADENIDVKDEIPPRRKRNSSLRGDGETTETFVAQMTVFDKNRRLQLLDGEYEVSMQQIEDCPVSKKRATWETILDGKRLPPFETFSQGPTLQFTLRWTADPSDPSTAPVAKPLSTRNSDTSTTESRISTLRPAPVAVKESVSTSMQSRIEHSPCEPRQKLRIFYQFLYNNNTRQQTEARDDLHCPWCTLNCRKLYSLLKHLKLSHSRFIFNYVPHPKGARIDVSINECYDGSYVGNPQDIHSQPGFAFSRNGPVKRTAVTHILVCRPKRTKPSLSEFLESEDGEPEQQRTYVSGHNRLYFHSDSCMPLRPQEMEVDSEDERDPEWLQEKTTTQIEEFTDVNEGEKEVMKLWNLHVMKNGFIADNQMSQASMLFVEICGPHIIRRNLCRNFLLHLVNLHDFNLVTIATIDQAMARLKEIEESFPELEAGQESLDATCNGHSLSLGFSLHGKCTKLES.

The segment at 326–355 is disordered; it reads DPSDPSTAPVAKPLSTRNSDTSTTESRIST. Over residues 340-354 the composition is skewed to polar residues; that stretch reads STRNSDTSTTESRIS. A C2H2-type zinc finger spans residues 408-431; that stretch reads LHCPWCTLNCRKLYSLLKHLKLSH. The interval 523 to 599 is VEFS-box; sequence RLYFHSDSCM…NQMSQASMLF (77 aa).

It belongs to the VEFS (VRN2-EMF2-FIS2-SU(Z)12) family. In terms of assembly, component of the prc2/eed-ezh2 complex.

The protein resides in the nucleus. Its function is as follows. Polycomb group (PcG) protein. Component of the prc2/eed-ezh2 complex, which methylates 'Lys-9' and 'Lys-27' of histone H3, leading to transcriptional repression of the affected target gene. The sequence is that of Polycomb protein suz12-B (suz12b) from Danio rerio (Zebrafish).